The following is a 409-amino-acid chain: Imidazolonepropionase (409 aa).

Residues His70 and His72 each contribute to the Fe(3+) site. Residues His70 and His72 each contribute to the Zn(2+) site. The 4-imidazolone-5-propanoate site is built by Arg79, Tyr137, and His164. Tyr137 lines the N-formimidoyl-L-glutamate pocket. A Fe(3+)-binding site is contributed by His225. Zn(2+) is bound at residue His225. 4-imidazolone-5-propanoate is bound at residue Gln228. N-formimidoyl-L-glutamate is bound by residues Asn314 and Gly316. Thr317 contributes to the 4-imidazolone-5-propanoate binding site.

Belongs to the metallo-dependent hydrolases superfamily. HutI family. The cofactor is Zn(2+). Fe(3+) is required as a cofactor.

The protein localises to the cytoplasm. The enzyme catalyses 4-imidazolone-5-propanoate + H2O = N-formimidoyl-L-glutamate. The protein operates within amino-acid degradation; L-histidine degradation into L-glutamate; N-formimidoyl-L-glutamate from L-histidine: step 3/3. Functionally, catalyzes the hydrolytic cleavage of the carbon-nitrogen bond in imidazolone-5-propanoate to yield N-formimidoyl-L-glutamate. It is the third step in the universal histidine degradation pathway. The protein is Imidazolonepropionase of Paenarthrobacter aurescens (strain TC1).